Consider the following 396-residue polypeptide: Acetate kinase (396 aa).

Mg(2+) is bound at residue Asn-7. Lys-14 serves as a coordination point for ATP. Residue Arg-88 participates in substrate binding. Asp-145 serves as the catalytic Proton donor/acceptor. ATP contacts are provided by residues His-205 to Gly-209, Asp-279 to Arg-281, and Gly-327 to Asn-331. Glu-381 contacts Mg(2+).

Belongs to the acetokinase family. Homodimer. Mg(2+) is required as a cofactor. Mn(2+) serves as cofactor.

It is found in the cytoplasm. It catalyses the reaction acetate + ATP = acetyl phosphate + ADP. It functions in the pathway metabolic intermediate biosynthesis; acetyl-CoA biosynthesis; acetyl-CoA from acetate: step 1/2. In terms of biological role, catalyzes the formation of acetyl phosphate from acetate and ATP. Can also catalyze the reverse reaction. The polypeptide is Acetate kinase (Campylobacter jejuni subsp. jejuni serotype O:2 (strain ATCC 700819 / NCTC 11168)).